Reading from the N-terminus, the 1372-residue chain is Putative Polyprotein CP (1372 aa).

Coiled-coil stretches lie at residues 126–153 (NKEN…LKNI) and 299–350 (EKQK…EELD). The segment at 372-398 (SESSEINEISDNETEQISGSDSDYNNE) is disordered. A compositionally biased stretch (polar residues) spans 386 to 398 (EQISGSDSDYNNE). Residues 739-756 (CKCYNCGEEGHISPNCKK) form a CCHC-type zinc finger. Residues 1162 to 1189 (DDRTNIQREKDQIEKADHNLELQKELNN) are a coiled coil.

It is found in the virion. This is Putative Polyprotein CP from Cassava vein mosaic virus (CsVMV).